Consider the following 331-residue polypeptide: UPF0194 membrane protein Ent638_1286 (331 aa).

The first 16 residues, 1–16 (MKKPVVVILAVVVLLA), serve as a signal peptide directing secretion. A coiled-coil region spans residues 107-208 (EEVAQAEAAV…LDLHDTTLIA (102 aa)).

It belongs to the UPF0194 family.

Its subcellular location is the periplasm. The sequence is that of UPF0194 membrane protein Ent638_1286 from Enterobacter sp. (strain 638).